We begin with the raw amino-acid sequence, 342 residues long: Transmembrane protein 115 homolog (342 aa).

Over 1–21 the chain is Cytoplasmic; sequence MQYSSRFLELNIPDSFLNINK. The helical transmembrane segment at 22 to 42 threads the bilayer; the sequence is IPDATKFITVTYICLTATLFC. At 43–121 the chain is on the lumenal side; the sequence is IRRSLYNKLV…NWNSSKEMFK (79 aa). Asparagine 114 carries an N-linked (GlcNAc...) asparagine glycan. A helical transmembrane segment spans residues 122-142; that stretch reads FIIVLGSLTNVLIIMLTLLVS. The Cytoplasmic segment spans residues 143–159; sequence FFSNKVRLDIPLDGNYT. A helical membrane pass occupies residues 160 to 180; it reads ILIGFPIIYRQLLPETTIIHL. At 181–207 the chain is on the lumenal side; sequence KTPQFLAKNFRFKLLPIFVMFTMTVTQ. The helical transmembrane segment at 208–228 threads the bilayer; it reads IIWFHHFAQLFSIWVTFFASW. Over 229–342 the chain is Cytoplasmic; the sequence is SYLRFFQKLA…QVLEERMVNP (114 aa).

Belongs to the TMEM115 family. Homooligomer.

It is found in the golgi apparatus membrane. Functionally, may play a role in retrograde transport of proteins from the Golgi to the endoplasmic reticulum. This Saccharomyces cerevisiae (strain ATCC 204508 / S288c) (Baker's yeast) protein is Transmembrane protein 115 homolog.